Reading from the N-terminus, the 534-residue chain is Prolyl 4-hydroxylase subunit alpha-2 (534 aa).

A signal peptide spans 1 to 21; the sequence is MKPWLCLVFFTSAFLIWHAEA. A glycan (N-linked (GlcNAc...) asparagine) is linked at Asn-115. The TPR repeat unit spans residues 207–240; it reads VEILDYLSYAVFQFGDLHRAMELTRRLISLDSTH. N-linked (GlcNAc...) asparagine glycosylation is present at Asn-263. Residues 413–519 form the Fe2OG dioxygenase domain; sequence TAELLQVANY…KWVSNKWFHE (107 aa). Residues His-431, Asp-433, and His-500 each contribute to the Fe cation site. Lys-510 contributes to the 2-oxoglutarate binding site.

Belongs to the P4HA family. In terms of assembly, heterotetramer of two alpha-2 chains and two beta chains (the beta chain is the multi-functional PDI). It depends on Fe(2+) as a cofactor. L-ascorbate serves as cofactor.

The protein localises to the endoplasmic reticulum lumen. It catalyses the reaction L-prolyl-[collagen] + 2-oxoglutarate + O2 = trans-4-hydroxy-L-prolyl-[collagen] + succinate + CO2. Its function is as follows. Catalyzes the post-translational formation of 4-hydroxyproline in -Xaa-Pro-Gly- sequences in collagens and other proteins. This chain is Prolyl 4-hydroxylase subunit alpha-2 (P4HA2), found in Gallus gallus (Chicken).